The following is a 180-amino-acid chain: NADH-quinone oxidoreductase subunit I (180 aa).

2 4Fe-4S ferredoxin-type domains span residues 48–80 (IVLT…LQKA) and 90–119 (EFFR…LTPD). Positions 60, 63, 66, 70, 99, 102, 105, and 109 each coordinate [4Fe-4S] cluster.

This sequence belongs to the complex I 23 kDa subunit family. NDH-1 is composed of 13 different subunits. Subunits NuoA, H, J, K, L, M, N constitute the membrane sector of the complex. It depends on [4Fe-4S] cluster as a cofactor.

The protein resides in the cell inner membrane. It carries out the reaction a quinone + NADH + 5 H(+)(in) = a quinol + NAD(+) + 4 H(+)(out). Functionally, NDH-1 shuttles electrons from NADH, via FMN and iron-sulfur (Fe-S) centers, to quinones in the respiratory chain. The immediate electron acceptor for the enzyme in this species is believed to be ubiquinone. Couples the redox reaction to proton translocation (for every two electrons transferred, four hydrogen ions are translocated across the cytoplasmic membrane), and thus conserves the redox energy in a proton gradient. In Sodalis glossinidius (strain morsitans), this protein is NADH-quinone oxidoreductase subunit I.